Reading from the N-terminus, the 121-residue chain is Small ribosomal subunit protein uS13 (121 aa).

The interval 91–121 (HRMSLPVRGQRTRTNARTRRGSRKTVAGRKK) is disordered. Residues 100–121 (QRTRTNARTRRGSRKTVAGRKK) are compositionally biased toward basic residues.

It belongs to the universal ribosomal protein uS13 family. Part of the 30S ribosomal subunit. Forms a loose heterodimer with protein S19. Forms two bridges to the 50S subunit in the 70S ribosome.

Functionally, located at the top of the head of the 30S subunit, it contacts several helices of the 16S rRNA. In the 70S ribosome it contacts the 23S rRNA (bridge B1a) and protein L5 of the 50S subunit (bridge B1b), connecting the 2 subunits; these bridges are implicated in subunit movement. Contacts the tRNAs in the A and P-sites. In Prochlorococcus marinus (strain SARG / CCMP1375 / SS120), this protein is Small ribosomal subunit protein uS13.